We begin with the raw amino-acid sequence, 1091 residues long: Multiple epidermal growth factor-like domains protein 11 (1091 aa).

The signal sequence occupies residues 1-18 (MAPSAVGLLVFLLQAALA). Over 19–847 (LNPEDPNVCS…SPALGAERHS (829 aa)) the chain is Extracellular. An EMI domain is found at 23-100 (DPNVCSHWES…YYENGDFCIP (78 aa)). Cystine bridges form between cysteine 27–cysteine 88, cysteine 53–cysteine 62, cysteine 87–cysteine 98, cysteine 102–cysteine 117, cysteine 119–cysteine 128, cysteine 145–cysteine 153, cysteine 147–cysteine 160, cysteine 162–cysteine 171, cysteine 184–cysteine 196, cysteine 190–cysteine 203, cysteine 205–cysteine 214, cysteine 227–cysteine 239, cysteine 233–cysteine 246, and cysteine 248–cysteine 257. EGF-like domains lie at 94-129 (NGDF…PDCS), 142-172 (SNRC…WRCE), 180-215 (HGKG…VYCE), 223-258 (HGAH…AVCA), 266-301 (FGQN…DRCQ), 314-344 (SQRC…PSCQ), 398-433 (YGNG…EVCA), 441-476 (YGPN…LDCS), and 484-519 (WGLN…DSCE). N-linked (GlcNAc...) asparagine glycosylation occurs at asparagine 269. 15 disulfides stabilise this stretch: cysteine 270–cysteine 282, cysteine 276–cysteine 289, cysteine 291–cysteine 300, cysteine 317–cysteine 325, cysteine 319–cysteine 332, cysteine 334–cysteine 343, cysteine 402–cysteine 414, cysteine 408–cysteine 421, cysteine 423–cysteine 432, cysteine 445–cysteine 457, cysteine 451–cysteine 464, cysteine 466–cysteine 475, cysteine 488–cysteine 500, cysteine 494–cysteine 507, and cysteine 509–cysteine 518. N-linked (GlcNAc...) asparagine glycosylation is present at asparagine 530. EGF-like domains lie at 570 to 605 (WGPN…PLCQ), 613 to 650 (YGHG…ALCN), 658 to 693 (FGQD…KDCS), 706 to 736 (FHTC…LFCT), 749 to 779 (GHIC…RHCE), and 787 to 822 (FGYG…IRCD). 18 disulfide bridges follow: cysteine 574/cysteine 586, cysteine 580/cysteine 593, cysteine 595/cysteine 604, cysteine 617/cysteine 631, cysteine 621/cysteine 638, cysteine 640/cysteine 649, cysteine 662/cysteine 674, cysteine 668/cysteine 681, cysteine 683/cysteine 692, cysteine 709/cysteine 717, cysteine 711/cysteine 724, cysteine 726/cysteine 735, cysteine 752/cysteine 760, cysteine 754/cysteine 767, cysteine 769/cysteine 778, cysteine 791/cysteine 803, cysteine 797/cysteine 810, and cysteine 812/cysteine 821. The helical transmembrane segment at 848 to 868 (VGAVTGIVLLLFLVVVLLGLF) threads the bilayer. The Cytoplasmic portion of the chain corresponds to 869–1091 (AWRRRRQKEK…NIYEVGRCLT (223 aa)).

Belongs to the MEGF family. As to quaternary structure, homomer. Does not interact with MEGF10.

The protein localises to the cell membrane. It is found in the basolateral cell membrane. Its function is as follows. May regulate the mosaic spacing of specific neuron subtypes in the retina through homotypic retinal neuron repulsion. Mosaics provide a mechanism to distribute each cell type evenly across the retina, ensuring that all parts of the visual field have access to a full set of processing elements. The polypeptide is Multiple epidermal growth factor-like domains protein 11 (Megf11) (Mus musculus (Mouse)).